Consider the following 135-residue polypeptide: MKEKNILFFFSFLINYLDNLSKNFCFRDYISFELNLLAETGYKLDLTKCCVSHVTTDLTYVSPKSARALSYKVGKPYRDKLLILPKFLLAKDSEITLEEKKQALTLTNYFFNRYLFHNNRQVKAREEFIEYITNI.

This is an uncharacterized protein from Rickettsia prowazekii (strain Madrid E).